The following is a 582-amino-acid chain: Semenogelin-2 (582 aa).

The N-terminal stretch at methionine 1–glycine 23 is a signal peptide. 6 disordered regions span residues cysteine 26–isoleucine 65, glycine 132–tyrosine 159, asparagine 272–glutamate 295, threonine 318–leucine 358, glutamate 379–arginine 417, and glutamate 439–threonine 582. 2 stretches are compositionally biased toward polar residues: residues glutamine 31 to proline 40 and arginine 137 to tyrosine 159. Polar residues predominate over residues lysine 325–glutamine 335. Over residues glycine 336–lysine 345 the composition is skewed to basic and acidic residues. 4 stretches are compositionally biased toward polar residues: residues glutamate 379–glutamine 397, glutamate 439–glutamine 457, lysine 487–phenylalanine 496, and serine 506–lysine 524. 2 stretches are compositionally biased toward basic and acidic residues: residues glycine 525–glutamate 552 and threonine 559–threonine 582.

Belongs to the semenogelin family. In terms of assembly, interacts with SERPINA5.

The protein resides in the secreted. Participates in the formation of a gel matrix (sperm coagulum) entrapping the accessory gland secretions and ejaculated spermatozoa. The sequence is that of Semenogelin-2 (SEMG2) from Hylobates lar (Lar gibbon).